The primary structure comprises 77 residues: Large ribosomal subunit protein eL20 (77 aa).

It belongs to the eukaryotic ribosomal protein eL20 family. In terms of assembly, part of the 50S ribosomal subunit. Binds 23S rRNA.

In Pyrococcus horikoshii (strain ATCC 700860 / DSM 12428 / JCM 9974 / NBRC 100139 / OT-3), this protein is Large ribosomal subunit protein eL20.